The chain runs to 353 residues: Photosystem II D2 protein (353 aa).

At Thr2 the chain carries N-acetylthreonine. Residue Thr2 is modified to Phosphothreonine. Residues 41-61 form a helical membrane-spanning segment; that stretch reads CAYFAVGGWFTGTTFVTSWYT. His118 serves as a coordination point for chlorophyll a. The chain crosses the membrane as a helical span at residues 125–141; the sequence is GFMLRQFELARSVQLRP. Pheophytin a is bound by residues Gln130 and Asn143. A helical transmembrane segment spans residues 153 to 166; it reads VFVSVFLIYPLGQS. His198 lines the chlorophyll a pocket. The chain crosses the membrane as a helical span at residues 208–228; that stretch reads AALLCAIHGATVENTLFEDGD. Positions 215 and 262 each coordinate a plastoquinone. A Fe cation-binding site is contributed by His215. His269 contributes to the Fe cation binding site. The chain crosses the membrane as a helical span at residues 279–295; that stretch reads GLWMSALGVVGLALNLR.

This sequence belongs to the reaction center PufL/M/PsbA/D family. PSII is composed of 1 copy each of membrane proteins PsbA, PsbB, PsbC, PsbD, PsbE, PsbF, PsbH, PsbI, PsbJ, PsbK, PsbL, PsbM, PsbT, PsbX, PsbY, PsbZ, Psb30/Ycf12, at least 3 peripheral proteins of the oxygen-evolving complex and a large number of cofactors. It forms dimeric complexes. The D1/D2 heterodimer binds P680, chlorophylls that are the primary electron donor of PSII, and subsequent electron acceptors. It shares a non-heme iron and each subunit binds pheophytin, quinone, additional chlorophylls, carotenoids and lipids. There is also a Cl(-1) ion associated with D1 and D2, which is required for oxygen evolution. The PSII complex binds additional chlorophylls, carotenoids and specific lipids. is required as a cofactor.

It localises to the plastid. Its subcellular location is the chloroplast thylakoid membrane. The catalysed reaction is 2 a plastoquinone + 4 hnu + 2 H2O = 2 a plastoquinol + O2. Functionally, photosystem II (PSII) is a light-driven water:plastoquinone oxidoreductase that uses light energy to abstract electrons from H(2)O, generating O(2) and a proton gradient subsequently used for ATP formation. It consists of a core antenna complex that captures photons, and an electron transfer chain that converts photonic excitation into a charge separation. The D1/D2 (PsbA/PsbD) reaction center heterodimer binds P680, the primary electron donor of PSII as well as several subsequent electron acceptors. D2 is needed for assembly of a stable PSII complex. In Guizotia abyssinica (Niger), this protein is Photosystem II D2 protein.